We begin with the raw amino-acid sequence, 260 residues long: Snake venom serine protease homolog (260 aa).

A signal peptide spans 1–18 (MVLVRVLANLLMLQLSYA). The propeptide occupies 19–24 (QKSSEL). The Peptidase S1 domain occupies 25-251 (IIGGDECNIN…HLDWIKSIIA (227 aa)). 6 disulfides stabilise this stretch: Cys-31-Cys-165, Cys-52-Cys-68, Cys-100-Cys-258, Cys-144-Cys-212, Cys-176-Cys-191, and Cys-202-Cys-227. Asp-112 (charge relay system) is an active-site residue. N-linked (GlcNAc...) asparagine glycans are attached at residues Asn-123 and Asn-124. Ser-206 (charge relay system) is an active-site residue.

This sequence belongs to the peptidase S1 family. Snake venom subfamily. In terms of tissue distribution, expressed by the venom gland.

The protein localises to the secreted. Functionally, snake venom serine protease homolog. May act in the hemostasis system of the prey. This Protobothrops jerdonii (Jerdon's pitviper) protein is Snake venom serine protease homolog.